Consider the following 82-residue polypeptide: Small ribosomal subunit protein bS16c (82 aa).

Belongs to the bacterial ribosomal protein bS16 family.

It localises to the plastid. The protein resides in the chloroplast. This chain is Small ribosomal subunit protein bS16c, found in Pyropia yezoensis (Susabi-nori).